Here is a 137-residue protein sequence, read N- to C-terminus: Protein CTLA-2-alpha (137 aa).

Residues M1–S27 form the signal peptide. 2 tandem repeats follow at residues E39–K41 and E42–K44. Residues E39–K44 form a 2 X 3 AA tandem repeats of E-W-K region. Positions A114–E137 are disordered.

To the propeptide regions of cysteine proteases.

The protein localises to the secreted. Its function is as follows. Not known, expressed in activated T-cell. The polypeptide is Protein CTLA-2-alpha (Ctla2a) (Mus musculus (Mouse)).